The primary structure comprises 169 residues: Myosin regulatory light chain 11 (169 aa).

Position 2 is a n,N,N-trimethylalanine (Ala-2). Phosphoserine is present on residues Ser-15 and Ser-16. 2 positions are modified to phosphothreonine: Thr-25 and Thr-35. The EF-hand 1 domain occupies 25–60 (TQIQEFKEAFTVIDQNRDGIIDKEDLRDTFAAMGRL). Ca(2+) is bound by residues Asp-38, Asn-40, Asp-42, and Asp-49. Ser-75 carries the phosphoserine modification. 2 consecutive EF-hand domains span residues 95 to 130 (DPED…QCDR) and 131 to 166 (FSQE…GDAK). The residue at position 101 (Thr-101) is a Phosphothreonine.

As to quaternary structure, myosin is a hexamer of 2 heavy chains and 4 light chains.

Functionally, myosin regulatory subunit that plays an essential to maintain muscle integrity during early development. Plays a role in muscle contraction. This Rattus norvegicus (Rat) protein is Myosin regulatory light chain 11 (Myl11).